A 369-amino-acid chain; its full sequence is S-adenosylmethionine decarboxylase proenzyme 2 (369 aa).

Residues glutamate 9 and glutamate 12 contribute to the active site. The active-site Schiff-base intermediate with substrate; via pyruvic acid is serine 69. Serine 69 is subject to Pyruvic acid (Ser); by autocatalysis. The Proton donor; for catalytic activity role is filled by cysteine 83. Active-site proton acceptor; for processing activity residues include serine 236 and histidine 249.

Belongs to the eukaryotic AdoMetDC family. Pyruvate is required as a cofactor. Is synthesized initially as an inactive proenzyme. Formation of the active enzyme involves a self-maturation process in which the active site pyruvoyl group is generated from an internal serine residue via an autocatalytic post-translational modification. Two non-identical subunits are generated from the proenzyme in this reaction, and the pyruvate is formed at the N-terminus of the alpha chain, which is derived from the carboxyl end of the proenzyme. The post-translation cleavage follows an unusual pathway, termed non-hydrolytic serinolysis, in which the side chain hydroxyl group of the serine supplies its oxygen atom to form the C-terminus of the beta chain, while the remainder of the serine residue undergoes an oxidative deamination to produce ammonia and the pyruvoyl group blocking the N-terminus of the alpha chain.

It carries out the reaction S-adenosyl-L-methionine + H(+) = S-adenosyl 3-(methylsulfanyl)propylamine + CO2. It participates in amine and polyamine biosynthesis; S-adenosylmethioninamine biosynthesis; S-adenosylmethioninamine from S-adenosyl-L-methionine: step 1/1. The chain is S-adenosylmethionine decarboxylase proenzyme 2 (SAMDC2) from Brassica juncea (Indian mustard).